The sequence spans 459 residues: Cysteine--tRNA ligase (459 aa).

Residue Cys27 coordinates Zn(2+). The 'HIGH' region signature appears at 29 to 39 (VTVYDDCHIGH). Zn(2+)-binding residues include Cys208, His233, and Glu237. The 'KMSKS' region signature appears at 265–269 (KMSKS). Lys268 serves as a coordination point for ATP.

This sequence belongs to the class-I aminoacyl-tRNA synthetase family. In terms of assembly, monomer. Requires Zn(2+) as cofactor.

The protein resides in the cytoplasm. The catalysed reaction is tRNA(Cys) + L-cysteine + ATP = L-cysteinyl-tRNA(Cys) + AMP + diphosphate. The protein is Cysteine--tRNA ligase of Francisella tularensis subsp. novicida (strain U112).